Reading from the N-terminus, the 216-residue chain is Large ribosomal subunit protein uL24m (216 aa).

A mitochondrion-targeting transit peptide spans 1 to 9 (MRLTLLLEM). The region spanning 56–89 (YFRGDTVEVLHGKDAGKQGKVTQVVRARNWVVVD) is the KOW domain.

Belongs to the universal ribosomal protein uL24 family. As to quaternary structure, component of the mitochondrial ribosome large subunit (39S) which comprises a 16S rRNA and about 50 distinct proteins. As to expression, ubiquitous. Expressed at greater levels in the kidney, adipose tissue, muscle and liver than the brain, heart, ovary and lung.

It localises to the mitochondrion. This is Large ribosomal subunit protein uL24m (mrpl24) from Xenopus laevis (African clawed frog).